A 289-amino-acid chain; its full sequence is 33 kDa chaperonin (289 aa).

Disulfide bonds link Cys-225–Cys-227 and Cys-258–Cys-261.

It belongs to the HSP33 family. In terms of processing, under oxidizing conditions two disulfide bonds are formed involving the reactive cysteines. Under reducing conditions zinc is bound to the reactive cysteines and the protein is inactive.

The protein localises to the cytoplasm. In terms of biological role, redox regulated molecular chaperone. Protects both thermally unfolding and oxidatively damaged proteins from irreversible aggregation. Plays an important role in the bacterial defense system toward oxidative stress. This chain is 33 kDa chaperonin, found in Nitrosococcus oceani (strain ATCC 19707 / BCRC 17464 / JCM 30415 / NCIMB 11848 / C-107).